Consider the following 142-residue polypeptide: DNA-directed RNA polymerase II subunit RPB4 (142 aa).

This sequence belongs to the eukaryotic RPB4 RNA polymerase subunit family. In terms of assembly, component of the RNA polymerase II (Pol II) core complex consisting of 12 subunits: a ten-subunit catalytic core composed of POLR2A/RPB1, POLR2B/RPB2, POLR2C/RPB3, POLR2I/RPB9, POLR2J/RPB11, POLR2E/RPABC1, POLR2F/RPABC2, POLR2H/RPABC3, POLR2K/RPABC4 and POLR2L/RPABC5 and a mobile stalk composed of two subunits POLR2D/RPB4 and POLR2G/RPB7, protruding from the core and functioning primarily in transcription initiation. Part of Pol II(G) complex, in which Pol II core associates with an additional subunit POLR2M; unlike conventional Pol II, Pol II(G) functions as a transcriptional repressor. Part of Pol II pre-initiation complex (PIC), in which Pol II core assembles with Mediator, general transcription factors and other specific initiation factors including GTF2E1, GTF2E2, GTF2F1, GTF2F2, TCEA1, ERCC2, ERCC3, GTF2H2, GTF2H3, GTF2H4, GTF2H5, GTF2A1, GTF2A2, GTF2B and TBP; this large multi-subunit PIC complex mediates DNA unwinding and targets Pol II core to the transcription start site where the first phosphodiester bond forms.

It localises to the nucleus. Core component of RNA polymerase II (Pol II), a DNA-dependent RNA polymerase which synthesizes mRNA precursors and many functional non-coding RNAs using the four ribonucleoside triphosphates as substrates. Pol II is the central component of the basal RNA polymerase II transcription machinery. It is composed of mobile elements that move relative to each other. POLR2D/RPB4 is part of a subcomplex with POLR2G/RPB7 that binds to a pocket formed by POLR2A/RPB1, POLR2B/RPB2 and POLR2F/RPABC2 at the base of the clamp element. The POLR2D/RPB4-POLR2G/RPB7 subcomplex seems to lock the clamp via POLR2G/RPB7 in the closed conformation thus preventing double-stranded DNA to enter the active site cleft. The POLR2D/RPB4-POLR2G/RPB7 subcomplex binds single-stranded DNA and RNA. This is DNA-directed RNA polymerase II subunit RPB4 (POLR2D) from Bos taurus (Bovine).